The chain runs to 145 residues: 3-hydroxyacyl-[acyl-carrier-protein] dehydratase FabZ (145 aa).

Residue histidine 51 is part of the active site.

Belongs to the thioester dehydratase family. FabZ subfamily.

It is found in the cytoplasm. The catalysed reaction is a (3R)-hydroxyacyl-[ACP] = a (2E)-enoyl-[ACP] + H2O. Functionally, involved in unsaturated fatty acids biosynthesis. Catalyzes the dehydration of short chain beta-hydroxyacyl-ACPs and long chain saturated and unsaturated beta-hydroxyacyl-ACPs. The protein is 3-hydroxyacyl-[acyl-carrier-protein] dehydratase FabZ of Staphylococcus carnosus (strain TM300).